Here is a 273-residue protein sequence, read N- to C-terminus: Anthranilate synthase beta subunit 2, chloroplastic (273 aa).

A chloroplast-targeting transit peptide spans 1–47 (MATAARLLPKIQSPASPAVAEARRRRPSSLRLGVTSGPARTLKQKLV). The interval 15–35 (ASPAVAEARRRRPSSLRLGVT) is disordered. A Glutamine amidotransferase type-1 domain is found at 70-269 (PIIVIDNYDS…IKIIEGYEAL (200 aa)). 121–123 (GPG) contacts L-glutamine. C148 serves as the catalytic Nucleophile. L-glutamine contacts are provided by residues Q152 and 202 to 203 (SL). Catalysis depends on residues H243 and E245.

Heterotetramer consisting of two non-identical subunits: a beta subunit and a large alpha subunit. As to expression, expressed in roots and leaves.

Its subcellular location is the plastid. The protein localises to the chloroplast. It carries out the reaction chorismate + L-glutamine = anthranilate + pyruvate + L-glutamate + H(+). Its pathway is amino-acid biosynthesis; L-tryptophan biosynthesis; L-tryptophan from chorismate: step 1/5. In terms of biological role, part of a heterotetrameric complex that catalyzes the two-step biosynthesis of anthranilate, an intermediate in the biosynthesis of L-tryptophan. In the first step, the glutamine-binding beta subunit of anthranilate synthase (AS) provides the glutamine amidotransferase activity which generates ammonia as a substrate that, along with chorismate, is used in the second step, catalyzed by the large alpha subunit of AS to produce anthranilate. This is Anthranilate synthase beta subunit 2, chloroplastic from Oryza sativa subsp. japonica (Rice).